We begin with the raw amino-acid sequence, 215 residues long: Pyridoxine/pyridoxamine 5'-phosphate oxidase (215 aa).

Residues 9–12 (RREY) and Lys-69 contribute to the substrate site. Residues 64–69 (RILLLK), 79–80 (FT), Lys-86, and Gln-108 contribute to the FMN site. Substrate is bound by residues Tyr-126, Arg-130, and Ser-134. FMN contacts are provided by residues 143-144 (QS) and Trp-188. 194-196 (RLH) contacts substrate. FMN is bound at residue Arg-198.

This sequence belongs to the pyridoxamine 5'-phosphate oxidase family. In terms of assembly, homodimer. The cofactor is FMN.

It catalyses the reaction pyridoxamine 5'-phosphate + O2 + H2O = pyridoxal 5'-phosphate + H2O2 + NH4(+). The catalysed reaction is pyridoxine 5'-phosphate + O2 = pyridoxal 5'-phosphate + H2O2. It participates in cofactor metabolism; pyridoxal 5'-phosphate salvage; pyridoxal 5'-phosphate from pyridoxamine 5'-phosphate: step 1/1. It functions in the pathway cofactor metabolism; pyridoxal 5'-phosphate salvage; pyridoxal 5'-phosphate from pyridoxine 5'-phosphate: step 1/1. Its function is as follows. Catalyzes the oxidation of either pyridoxine 5'-phosphate (PNP) or pyridoxamine 5'-phosphate (PMP) into pyridoxal 5'-phosphate (PLP). In Pseudomonas paraeruginosa (strain DSM 24068 / PA7) (Pseudomonas aeruginosa (strain PA7)), this protein is Pyridoxine/pyridoxamine 5'-phosphate oxidase.